Consider the following 141-residue polypeptide: Cytochrome c-type biogenesis protein CcmE (141 aa).

The Cytoplasmic portion of the chain corresponds to 1-7 (MRARTRR). A helical; Signal-anchor for type II membrane protein transmembrane segment spans residues 8–28 (LYTFGIAAALIVAAAALAFFA). Residues 29–141 (LRENANLFYT…RELKPLEAGG (113 aa)) are Periplasmic-facing. Heme is bound by residues His125 and Tyr129.

The protein belongs to the CcmE/CycJ family.

It is found in the cell inner membrane. In terms of biological role, heme chaperone required for the biogenesis of c-type cytochromes. Transiently binds heme delivered by CcmC and transfers the heme to apo-cytochromes in a process facilitated by CcmF and CcmH. The chain is Cytochrome c-type biogenesis protein CcmE from Hyphomonas neptunium (strain ATCC 15444).